Reading from the N-terminus, the 473-residue chain is ATP synthase subunit beta (473 aa).

158–165 is a binding site for ATP; that stretch reads GGAGVGKT.

The protein belongs to the ATPase alpha/beta chains family. F-type ATPases have 2 components, CF(1) - the catalytic core - and CF(0) - the membrane proton channel. CF(1) has five subunits: alpha(3), beta(3), gamma(1), delta(1), epsilon(1). CF(0) has three main subunits: a(1), b(2) and c(9-12). The alpha and beta chains form an alternating ring which encloses part of the gamma chain. CF(1) is attached to CF(0) by a central stalk formed by the gamma and epsilon chains, while a peripheral stalk is formed by the delta and b chains.

Its subcellular location is the cell membrane. It catalyses the reaction ATP + H2O + 4 H(+)(in) = ADP + phosphate + 5 H(+)(out). Produces ATP from ADP in the presence of a proton gradient across the membrane. The catalytic sites are hosted primarily by the beta subunits. The chain is ATP synthase subunit beta from Bacillus velezensis (strain DSM 23117 / BGSC 10A6 / LMG 26770 / FZB42) (Bacillus amyloliquefaciens subsp. plantarum).